We begin with the raw amino-acid sequence, 389 residues long: GDSL esterase/lipase At5g14450 (389 aa).

Positions 1–30 (MKDNLERAKLMVSSTVFSWLLLCLFAVTTS) are cleaved as a signal peptide. The active-site Nucleophile is serine 48. Residues asparagine 125 and asparagine 335 are each glycosylated (N-linked (GlcNAc...) asparagine). Residues aspartate 354 and histidine 357 contribute to the active site.

This sequence belongs to the 'GDSL' lipolytic enzyme family.

It is found in the secreted. The chain is GDSL esterase/lipase At5g14450 from Arabidopsis thaliana (Mouse-ear cress).